The sequence spans 158 residues: uncharacterized protein (158 aa).

Residues 33 to 53 traverse the membrane as a helical segment; sequence VLAAVPQLGAAKVLVLLLLGV.

The protein resides in the membrane. This is an uncharacterized protein from Saccharomyces cerevisiae (strain ATCC 204508 / S288c) (Baker's yeast).